The sequence spans 343 residues: tRNA N6-adenosine threonylcarbamoyltransferase (343 aa).

The Fe cation site is built by H120 and H124. Substrate is bound by residues 142–146, D175, G188, D192, and N281; that span reads VVSGG. D310 provides a ligand contact to Fe cation.

The protein belongs to the KAE1 / TsaD family. The cofactor is Fe(2+).

The protein localises to the cytoplasm. It catalyses the reaction L-threonylcarbamoyladenylate + adenosine(37) in tRNA = N(6)-L-threonylcarbamoyladenosine(37) in tRNA + AMP + H(+). In terms of biological role, required for the formation of a threonylcarbamoyl group on adenosine at position 37 (t(6)A37) in tRNAs that read codons beginning with adenine. Is involved in the transfer of the threonylcarbamoyl moiety of threonylcarbamoyl-AMP (TC-AMP) to the N6 group of A37, together with TsaE and TsaB. TsaD likely plays a direct catalytic role in this reaction. The chain is tRNA N6-adenosine threonylcarbamoyltransferase from Bacillus anthracis.